A 610-amino-acid polypeptide reads, in one-letter code: Propanediol dehydratase-reactivating factor large subunit (610 aa).

11 to 13 serves as a coordination point for ATP; that stretch reads NSS. The Mg(2+) site is built by T105, D166, and D183. ATP-binding positions include 459 to 462, 557 to 558, and R591; these read EEIK and GS.

It belongs to the DdrA/PduG family. As to quaternary structure, forms a heterotetramer PduG(2)/PduH(2). The cofactor is Mg(2+).

The protein resides in the bacterial microcompartment. The enzyme catalyses ATP + H2O = ADP + phosphate + H(+). It functions in the pathway polyol metabolism; 1,2-propanediol degradation. Functionally, large subunit of the propanediol dehydratase-reactivating factor (DDR), which reactivates suicidally inhibited adenosylcobalamin-dependent propanediol dehydratase (diol dehydratase, DDH) found in the bacterial microcompartment (BMC) dedicated to 1,2-propanediol (1,2-PD) degradation. Reactivates inactivated DDH in the presence of ATP, Mg(2+) and free adenosylcobalamin (AdoCbl), by mediating the exchange of the tightly bound damaged cofactor AdoCbl for a free intact one. This subunit contains the adenosine nucleotide binding site. In terms of biological role, the 1,2-PD-specific bacterial microcompartment (BMC) concentrates low levels of 1,2-PD catabolic enzymes, concentrates volatile reaction intermediates thus enhancing pathway flux and keeps the level of toxic, mutagenic propionaldehyde low. The sequence is that of Propanediol dehydratase-reactivating factor large subunit from Salmonella typhimurium (strain LT2 / SGSC1412 / ATCC 700720).